We begin with the raw amino-acid sequence, 186 residues long: ATP synthase subunit b (186 aa).

Residues 28–48 (IVWSIIPFAVILFVFAKVVLP) traverse the membrane as a helical segment.

Belongs to the ATPase B chain family. F-type ATPases have 2 components, F(1) - the catalytic core - and F(0) - the membrane proton channel. F(1) has five subunits: alpha(3), beta(3), gamma(1), delta(1), epsilon(1). F(0) has three main subunits: a(1), b(2) and c(10-14). The alpha and beta chains form an alternating ring which encloses part of the gamma chain. F(1) is attached to F(0) by a central stalk formed by the gamma and epsilon chains, while a peripheral stalk is formed by the delta and b chains.

The protein localises to the cell membrane. In terms of biological role, f(1)F(0) ATP synthase produces ATP from ADP in the presence of a proton or sodium gradient. F-type ATPases consist of two structural domains, F(1) containing the extramembraneous catalytic core and F(0) containing the membrane proton channel, linked together by a central stalk and a peripheral stalk. During catalysis, ATP synthesis in the catalytic domain of F(1) is coupled via a rotary mechanism of the central stalk subunits to proton translocation. Its function is as follows. Component of the F(0) channel, it forms part of the peripheral stalk, linking F(1) to F(0). This is ATP synthase subunit b from Corynebacterium urealyticum (strain ATCC 43042 / DSM 7109).